The primary structure comprises 486 residues: Maternal protein exuperantia (486 aa).

2 disordered regions span residues 202–233 and 386–477; these read NARV…RDEF and STIR…ISLP. A compositionally biased stretch (basic and acidic residues) spans 218–233; it reads ADKHVKNGLQKERDEF. The span at 387–397 shows a compositional bias: basic residues; sequence TIRRRNKRNTP. Polar residues-rich tracts occupy residues 420–437 and 464–476; these read KSQS…TPSP and SALN…SISL.

Ensures the proper localization of the mRNA of the bicoid gene to the anterior regions of the oocyte thus playing a fundamental role in the establishment of the polarity of the oocyte. May bind the bcd mRNA. This Drosophila virilis (Fruit fly) protein is Maternal protein exuperantia (exu).